The sequence spans 386 residues: uncharacterized protein (386 aa).

The protein belongs to the TelA family.

This is an uncharacterized protein from Bacillus subtilis (strain 168).